Here is a 433-residue protein sequence, read N- to C-terminus: F-box only protein 15 (433 aa).

An F-box domain is found at 1 to 41 (MPSEILVKILSYLDAVTLVCIGCVSRRFYHLADDNLIWVRK).

Directly interacts with SKP1 and CUL1. As to expression, expressed in testis.

In terms of biological role, substrate-recognition component of the SCF (SKP1-CUL1-F-box protein)-type E3 ubiquitin ligase complex. The protein is F-box only protein 15 (Fbxo15) of Mus musculus (Mouse).